The primary structure comprises 367 residues: tRNA-dihydrouridine(20a/20b) synthase [NAD(P)+] (367 aa).

FMN-binding positions include 45–47 and Q99; that span reads PMV. Catalysis depends on C128, which acts as the Proton donor. FMN contacts are provided by residues K169, H197, 231–233, and 255–256; these read NGD and VR.

The protein belongs to the Dus family. Dus4 subfamily. It depends on FMN as a cofactor.

The enzyme catalyses 5,6-dihydrouridine(20a) in tRNA + NADP(+) = uridine(20a) in tRNA + NADPH + H(+). It carries out the reaction 5,6-dihydrouridine(20a) in tRNA + NAD(+) = uridine(20a) in tRNA + NADH + H(+). The catalysed reaction is 5,6-dihydrouridine(20b) in tRNA + NAD(+) = uridine(20b) in tRNA + NADH + H(+). It catalyses the reaction 5,6-dihydrouridine(20b) in tRNA + NADP(+) = uridine(20b) in tRNA + NADPH + H(+). The enzyme catalyses a 5,6-dihydrouridine in mRNA + NAD(+) = a uridine in mRNA + NADH + H(+). It carries out the reaction a 5,6-dihydrouridine in mRNA + NADP(+) = a uridine in mRNA + NADPH + H(+). Its function is as follows. Catalyzes the synthesis of dihydrouridine, a modified base found in the D-loop of most tRNAs. Specifically modifies U20a and U20b in cytoplasmic tRNAs. Also able to mediate dihydrouridylation of some mRNAs, thereby affecting their translation. The sequence is that of tRNA-dihydrouridine(20a/20b) synthase [NAD(P)+] from Saccharomyces cerevisiae (strain ATCC 204508 / S288c) (Baker's yeast).